The sequence spans 95 residues: Cytochrome b (95 aa).

Helical transmembrane passes span 1–16 (GLCL…FLAM), 40–61 (WLIR…YLHI), and 76–95 (WNIG…VGYV). 2 residues coordinate heme b: His-46 and His-60.

It belongs to the cytochrome b family. In terms of assembly, the cytochrome bc1 complex contains 3 respiratory subunits (MT-CYB, CYC1 and UQCRFS1), 2 core proteins (UQCRC1 and UQCRC2) and probably 6 low-molecular weight proteins. Requires heme b as cofactor.

It is found in the mitochondrion inner membrane. Component of the ubiquinol-cytochrome c reductase complex (complex III or cytochrome b-c1 complex) that is part of the mitochondrial respiratory chain. The b-c1 complex mediates electron transfer from ubiquinol to cytochrome c. Contributes to the generation of a proton gradient across the mitochondrial membrane that is then used for ATP synthesis. The polypeptide is Cytochrome b (mt-cyb) (Gomphosus varius (Bird wrasse)).